We begin with the raw amino-acid sequence, 396 residues long: S-adenosylmethionine synthase (396 aa).

Histidine 16 contacts ATP. Residue aspartate 18 coordinates Mg(2+). Residue glutamate 44 participates in K(+) binding. L-methionine contacts are provided by glutamate 57 and glutamine 100. The interval 100–110 (QSVDIAQGVDR) is flexible loop. Residues 165 to 167 (DAK), aspartate 240, 246 to 247 (RK), alanine 263, and lysine 267 each bind ATP. Residue aspartate 240 participates in L-methionine binding. Lysine 271 contributes to the L-methionine binding site.

It belongs to the AdoMet synthase family. As to quaternary structure, homotetramer; dimer of dimers. Requires Mg(2+) as cofactor. It depends on K(+) as a cofactor.

The protein localises to the cytoplasm. It catalyses the reaction L-methionine + ATP + H2O = S-adenosyl-L-methionine + phosphate + diphosphate. The protein operates within amino-acid biosynthesis; S-adenosyl-L-methionine biosynthesis; S-adenosyl-L-methionine from L-methionine: step 1/1. Functionally, catalyzes the formation of S-adenosylmethionine (AdoMet) from methionine and ATP. The overall synthetic reaction is composed of two sequential steps, AdoMet formation and the subsequent tripolyphosphate hydrolysis which occurs prior to release of AdoMet from the enzyme. The sequence is that of S-adenosylmethionine synthase from Stutzerimonas stutzeri (strain A1501) (Pseudomonas stutzeri).